The following is a 574-amino-acid chain: 5'-nucleotidase (574 aa).

The N-terminal stretch at 1–26 (MCPRAARAPATLLLALGAVLWPAAGA) is a signal peptide. Zn(2+) is bound by residues Asp-36 and His-38. A disulfide bond links Cys-51 and Cys-57. Asn-53 carries N-linked (GlcNAc...) asparagine glycosylation. Residues Asp-85, Asn-117, His-220, and His-243 each coordinate Zn(2+). N-linked (GlcNAc...) asparagine glycosylation is found at Asn-311 and Asn-333. Cystine bridges form between Cys-353–Cys-358 and Cys-365–Cys-387. Arg-354 is a binding site for AMP. Arg-354 contacts IMP. AMP-binding residues include Asn-390 and Arg-395. Asn-390 and Arg-395 together coordinate IMP. N-linked (GlcNAc...) asparagine glycosylation is present at Asn-403. Phe-417 is a binding site for AMP. Phe-417 serves as a coordination point for IMP. An intrachain disulfide couples Cys-476 to Cys-479. Residues Phe-500 and Asp-506 each contribute to the AMP site. Residues Phe-500 and Asp-506 each coordinate IMP. A lipid anchor (GPI-anchor amidated serine) is attached at Ser-549. The propeptide at 550 to 574 (TGSHCHGSFSLIFLSLWAVIFVLYQ) is removed in mature form.

The protein belongs to the 5'-nucleotidase family. In terms of assembly, homodimer. Requires Zn(2+) as cofactor.

The protein localises to the cell membrane. It carries out the reaction a ribonucleoside 5'-phosphate + H2O = a ribonucleoside + phosphate. The enzyme catalyses a 2'-deoxyribonucleoside 5'-phosphate + H2O = a 2'-deoxyribonucleoside + phosphate. It catalyses the reaction dTMP + H2O = thymidine + phosphate. The catalysed reaction is CMP + H2O = cytidine + phosphate. It carries out the reaction IMP + H2O = inosine + phosphate. The enzyme catalyses AMP + H2O = adenosine + phosphate. It catalyses the reaction GMP + H2O = guanosine + phosphate. The catalysed reaction is UMP + H2O = uridine + phosphate. It carries out the reaction dAMP + H2O = 2'-deoxyadenosine + phosphate. The enzyme catalyses dCMP + H2O = 2'-deoxycytidine + phosphate. Inhibited by adenosine 5'-(alpha,beta-methylene)-diphosphate (AMPCP). Functionally, catalyzes the hydrolysis of nucleotide monophosphates, releasing inorganic phosphate and the corresponding nucleoside, with AMP being the preferred substrate. Shows a preference for ribonucleotide monophosphates over their equivalent deoxyribose forms. Other substrates include IMP, UMP, GMP, CMP, dAMP, dCMP, dTMP, NAD and NMN. In Homo sapiens (Human), this protein is 5'-nucleotidase (NT5E).